An 85-amino-acid chain; its full sequence is MKIIIFLIVSSLMLIGVKTDNGYLLNKATGCKVWCVINNASCNSECKLRRGNYGYCYFWKLACYCEGAPKSELWAYATNKCNGKL.

The first 19 residues, methionine 1–threonine 19, serve as a signal peptide directing secretion. In terms of domain architecture, LCN-type CS-alpha/beta spans aspartate 20–asparagine 82. Disulfide bonds link cysteine 31-cysteine 81, cysteine 35-cysteine 56, cysteine 42-cysteine 63, and cysteine 46-cysteine 65.

It belongs to the long (4 C-C) scorpion toxin superfamily. Sodium channel inhibitor family. As to expression, expressed by the venom gland.

The protein localises to the secreted. In terms of biological role, beta toxins bind voltage-independently at site-4 of sodium channels (Nav) and shift the voltage of activation toward more negative potentials thereby affecting sodium channel activation and promoting spontaneous and repetitive firing. Competes, with apparent high affinity, with anti-insect and anti-mammalian beta-toxins for binding to cockroach and rat brain synaptosomes, respectively. Also competes with an anti-mammalian alpha-toxin on binding to rat brain sodium channels. Has a weak effect on cardiac sodium channels and a marked effect on rat brain and skeletal muscle sodium channels. In Leiurus hebraeus (Hebrew deathstalker scorpion), this protein is Beta-mammal/insect toxin Lqhb1.